A 147-amino-acid polypeptide reads, in one-letter code: Cytochrome c oxidase subunit 3 (147 aa).

4 helical membrane passes run 13–33, 48–68, 83–103, and 125–145; these read FQIP…VTWA, GLFI…YEYF, FFMA…FLLI, and AWYW…IYWW.

Belongs to the cytochrome c oxidase subunit 3 family. In terms of assembly, component of the cytochrome c oxidase (complex IV, CIV), a multisubunit enzyme composed of a catalytic core of 3 subunits and several supernumerary subunits. The complex exists as a monomer or a dimer and forms supercomplexes (SCs) in the inner mitochondrial membrane with ubiquinol-cytochrome c oxidoreductase (cytochrome b-c1 complex, complex III, CIII).

The protein resides in the mitochondrion inner membrane. The enzyme catalyses 4 Fe(II)-[cytochrome c] + O2 + 8 H(+)(in) = 4 Fe(III)-[cytochrome c] + 2 H2O + 4 H(+)(out). Functionally, component of the cytochrome c oxidase, the last enzyme in the mitochondrial electron transport chain which drives oxidative phosphorylation. The respiratory chain contains 3 multisubunit complexes succinate dehydrogenase (complex II, CII), ubiquinol-cytochrome c oxidoreductase (cytochrome b-c1 complex, complex III, CIII) and cytochrome c oxidase (complex IV, CIV), that cooperate to transfer electrons derived from NADH and succinate to molecular oxygen, creating an electrochemical gradient over the inner membrane that drives transmembrane transport and the ATP synthase. Cytochrome c oxidase is the component of the respiratory chain that catalyzes the reduction of oxygen to water. Electrons originating from reduced cytochrome c in the intermembrane space (IMS) are transferred via the dinuclear copper A center (CU(A)) of subunit 2 and heme A of subunit 1 to the active site in subunit 1, a binuclear center (BNC) formed by heme A3 and copper B (CU(B)). The BNC reduces molecular oxygen to 2 water molecules using 4 electrons from cytochrome c in the IMS and 4 protons from the mitochondrial matrix. The polypeptide is Cytochrome c oxidase subunit 3 (COIII) (Spodoptera frugiperda (Fall armyworm)).